The chain runs to 772 residues: Elongin-A (772 aa).

In terms of domain architecture, TFIIS N-terminal spans 4 to 79; it reads ESALQVVEKL…AQWKKLVPVE (76 aa). 2 stretches are compositionally biased toward basic and acidic residues: residues 79 to 105 and 136 to 156; these read ERNA…LQKE and LSEL…DERK. Disordered regions lie at residues 79-403 and 418-466; these read ERNA…FEQP and KKKK…EKPA. Position 196 is a phosphoserine (serine 196). Composition is skewed to basic and acidic residues over residues 226-235, 253-269, 275-308, 321-343, and 372-384; these read QERHLGEPHG, RPVD…VSRE, LSKE…EGSS, SDNH…KSKQ, and PEGK…DRKS. A phosphoserine mark is found at serine 384 and serine 387. Threonine 394 carries the phosphothreonine modification. Residue lysine 434 is modified to N6-acetyllysine. A compositionally biased stretch (basic and acidic residues) spans 434 to 443; the sequence is KGLKKNDSKS. Serine 516 carries the phosphoserine modification. Residues 522-681 form an activation domain region; that stretch reads EAGFTGRRMN…PPRDVRRRQE (160 aa). The interval 550–559 is BC-box; that stretch reads TLHQQCIRVL. An F-box domain is found at 566–610; it reads IFEVGGVPYSVLEPVLERCTPDQLYRIEEYNHVLIEETDQLWKVH. A disordered region spans residues 674-732; it reads RDVRRRQEKFGTGGAAVPEKIKIKPAPYPMGSSHASASSISFNPSPEEPAYDGPSTSSA. The segment covering 705–714 has biased composition (low complexity); sequence SSHASASSIS.

In terms of assembly, heterotrimer of an A (ELOA, ELOA2 or ELOA3P), ELOB and ELOC subunit. Part of a multisubunit ubiquitin ligase complex consisting of elongin BC complex (ELOB and ELOC), elongin A/ELOA, RBX1 and CUL5. Interacts with ERCC6; the interaction is induced by DNA damaging agents or inhibitors of RNA polymerase II elongation. Interacts (via BC-box) with CUL5.

The protein localises to the nucleus. In terms of biological role, SIII, also known as elongin, is a general transcription elongation factor that increases the RNA polymerase II transcription elongation past template-encoded arresting sites. Subunit A is transcriptionally active and its transcription activity is strongly enhanced by binding to the dimeric complex of the SIII regulatory subunits B and C (elongin BC complex). As part of a multisubunit complex composed of elongin BC complex (ELOB and ELOC), elongin A/ELOA, RBX1 and CUL5; polyubiquitinates monoubiquitinated POLR2A. In Homo sapiens (Human), this protein is Elongin-A.